A 355-amino-acid polypeptide reads, in one-letter code: Beta-ketoacyl-[acyl-carrier-protein] synthase III (355 aa).

Residues Cys-122 and His-280 contribute to the active site. Positions 281–285 (QANMR) are ACP-binding. The active site involves Asn-311.

It belongs to the thiolase-like superfamily. FabH family. As to quaternary structure, homodimer.

Its subcellular location is the cytoplasm. It catalyses the reaction malonyl-[ACP] + acetyl-CoA + H(+) = 3-oxobutanoyl-[ACP] + CO2 + CoA. Its pathway is lipid metabolism; fatty acid biosynthesis. Its function is as follows. Catalyzes the condensation reaction of fatty acid synthesis by the addition to an acyl acceptor of two carbons from malonyl-ACP. Catalyzes the first condensation reaction which initiates fatty acid synthesis and may therefore play a role in governing the total rate of fatty acid production. Possesses both acetoacetyl-ACP synthase and acetyl transacylase activities. Its substrate specificity determines the biosynthesis of branched-chain and/or straight-chain of fatty acids. The chain is Beta-ketoacyl-[acyl-carrier-protein] synthase III from Kocuria rhizophila (strain ATCC 9341 / DSM 348 / NBRC 103217 / DC2201).